A 177-amino-acid chain; its full sequence is Probable nicotinate-nucleotide adenylyltransferase (177 aa).

Belongs to the NadD family.

It carries out the reaction nicotinate beta-D-ribonucleotide + ATP + H(+) = deamido-NAD(+) + diphosphate. It functions in the pathway cofactor biosynthesis; NAD(+) biosynthesis; deamido-NAD(+) from nicotinate D-ribonucleotide: step 1/1. Functionally, catalyzes the reversible adenylation of nicotinate mononucleotide (NaMN) to nicotinic acid adenine dinucleotide (NaAD). In Nitratiruptor sp. (strain SB155-2), this protein is Probable nicotinate-nucleotide adenylyltransferase.